The chain runs to 150 residues: L-alanine exporter AlaE (150 aa).

4 helical membrane-spanning segments follow: residues 17–37, 48–68, 86–106, and 111–131; these read FAMV…VSGM, LSIP…DYVL, LVAY…TVGA, and IITA…LYGY.

Belongs to the AlaE exporter family.

The protein resides in the cell inner membrane. Its function is as follows. Exports L-alanine. This is L-alanine exporter AlaE from Vibrio cholerae serotype O1 (strain ATCC 39315 / El Tor Inaba N16961).